Reading from the N-terminus, the 114-residue chain is Iron-sulfur cluster insertion protein ErpA (114 aa).

Iron-sulfur cluster contacts are provided by Cys42, Cys106, and Cys108.

The protein belongs to the HesB/IscA family. As to quaternary structure, homodimer. Iron-sulfur cluster is required as a cofactor.

In terms of biological role, required for insertion of 4Fe-4S clusters for at least IspG. The chain is Iron-sulfur cluster insertion protein ErpA from Erwinia tasmaniensis (strain DSM 17950 / CFBP 7177 / CIP 109463 / NCPPB 4357 / Et1/99).